A 141-amino-acid chain; its full sequence is Hemoglobin subunit alpha-1 (141 aa).

Positions 1–141 (VLSAADKGNV…VSTVLTSKYR (141 aa)) constitute a Globin domain. His58 lines the O2 pocket. A heme b-binding site is contributed by His87.

It belongs to the globin family. Heterotetramer of two alpha chains and two beta chains. Red blood cells.

In terms of biological role, involved in oxygen transport from the lung to the various peripheral tissues. The protein is Hemoglobin subunit alpha-1 of Bos mutus grunniens (Wild yak).